A 475-amino-acid polypeptide reads, in one-letter code: Ataxin-10 (475 aa).

Position 10 is an omega-N-methylarginine (arginine 10). Phosphoserine occurs at positions 12 and 77. Threonine 82 is subject to Phosphothreonine. Serine 430 is modified (phosphoserine).

This sequence belongs to the ataxin-10 family. As to quaternary structure, homooligomer. Interacts with GNB2. Interacts with IQCB1. Interacts with OGT. Polyubiquitinated. In terms of processing, phosphorylation at Ser-12 by AURKB promotes the association of ATXN10 with PLK1. Phosphorylation at Ser-77 and Thr-82 by PLK1 may play a role in the regulation of cytokinesis and may stimulate the proteasome-mediated degradation of ATXN10.

It is found in the cytoplasm. It localises to the perinuclear region. The protein localises to the cytoskeleton. Its subcellular location is the cilium basal body. The protein resides in the microtubule organizing center. It is found in the centrosome. It localises to the centriole. The protein localises to the midbody. In terms of biological role, may play a role in the regulation of cytokinesis. May play a role in signaling by stimulating protein glycosylation. Induces neuritogenesis by activating the Ras-MAP kinase pathway and is necessary for the survival of cerebellar neurons. Does not appear to play a major role in ciliogenesis. The protein is Ataxin-10 (ATXN10) of Bos taurus (Bovine).